Reading from the N-terminus, the 124-residue chain is Small ribosomal subunit protein uS10 (124 aa).

It belongs to the universal ribosomal protein uS10 family.

The protein is Small ribosomal subunit protein uS10 (rps20) of Dictyostelium discoideum (Social amoeba).